The sequence spans 466 residues: UDP-glycosyltransferase 91B1 (466 aa).

UDP-alpha-D-glucose is bound by residues T286, 342-344 (VPQ), 359-367 (HCGWGSAVE), and 381-384 (NLDQ).

The protein belongs to the UDP-glycosyltransferase family.

In Arabidopsis thaliana (Mouse-ear cress), this protein is UDP-glycosyltransferase 91B1 (UGT91B1).